A 122-amino-acid chain; its full sequence is Large ribosomal subunit protein uL14 (122 aa).

Belongs to the universal ribosomal protein uL14 family. Part of the 50S ribosomal subunit. Forms a cluster with proteins L3 and L19. In the 70S ribosome, L14 and L19 interact and together make contacts with the 16S rRNA in bridges B5 and B8.

Its function is as follows. Binds to 23S rRNA. Forms part of two intersubunit bridges in the 70S ribosome. The polypeptide is Large ribosomal subunit protein uL14 (Bdellovibrio bacteriovorus (strain ATCC 15356 / DSM 50701 / NCIMB 9529 / HD100)).